The following is a 509-amino-acid chain: Lanosterol 14-alpha demethylase (509 aa).

Residues 30–50 (GNLLSMLLIACAFTLSLVYLF) form a helical membrane-spanning segment. C455 serves as a coordination point for heme.

This sequence belongs to the cytochrome P450 family. It depends on heme as a cofactor. In terms of processing, ubiquitinated by MARCHF6, leading to proteasomal degradation.

Its subcellular location is the endoplasmic reticulum membrane. It is found in the microsome membrane. The enzyme catalyses a 14alpha-methyl steroid + 3 reduced [NADPH--hemoprotein reductase] + 3 O2 = a Delta(14) steroid + formate + 3 oxidized [NADPH--hemoprotein reductase] + 4 H2O + 4 H(+). The catalysed reaction is lanosterol + 3 reduced [NADPH--hemoprotein reductase] + 3 O2 = 4,4-dimethyl-5alpha-cholesta-8,14,24-trien-3beta-ol + formate + 3 oxidized [NADPH--hemoprotein reductase] + 4 H2O + 4 H(+). It catalyses the reaction 24,25-dihydrolanosterol + 3 reduced [NADPH--hemoprotein reductase] + 3 O2 = 4,4-dimethyl-8,14-cholestadien-3beta-ol + formate + 3 oxidized [NADPH--hemoprotein reductase] + 4 H2O + 4 H(+). It carries out the reaction a 14alpha-methyl steroid + reduced [NADPH--hemoprotein reductase] + O2 = a 14alpha-hydroxymethyl steroid + oxidized [NADPH--hemoprotein reductase] + H2O + H(+). The enzyme catalyses a 14alpha-hydroxymethyl steroid + reduced [NADPH--hemoprotein reductase] + O2 = a 14alpha-formyl steroid + oxidized [NADPH--hemoprotein reductase] + 2 H2O + H(+). The catalysed reaction is a 14alpha-formyl steroid + reduced [NADPH--hemoprotein reductase] + O2 = a Delta(14) steroid + formate + oxidized [NADPH--hemoprotein reductase] + H2O + 2 H(+). It catalyses the reaction lanosterol + reduced [NADPH--hemoprotein reductase] + O2 = 32-hydroxylanosterol + oxidized [NADPH--hemoprotein reductase] + H2O + H(+). It carries out the reaction 32-hydroxylanosterol + reduced [NADPH--hemoprotein reductase] + O2 = 32-oxolanosterol + oxidized [NADPH--hemoprotein reductase] + 2 H2O + H(+). The enzyme catalyses 32-oxolanosterol + reduced [NADPH--hemoprotein reductase] + O2 = 4,4-dimethyl-5alpha-cholesta-8,14,24-trien-3beta-ol + formate + oxidized [NADPH--hemoprotein reductase] + H2O + 2 H(+). The catalysed reaction is 24,25-dihydrolanosterol + reduced [NADPH--hemoprotein reductase] + O2 = 32-hydroxy-24,25-dihydrolanosterol + oxidized [NADPH--hemoprotein reductase] + H2O + H(+). It catalyses the reaction 32-hydroxy-24,25-dihydrolanosterol + reduced [NADPH--hemoprotein reductase] + O2 = 32-oxo-24,25-dihydrolanosterol + oxidized [NADPH--hemoprotein reductase] + 2 H2O + H(+). It carries out the reaction 32-oxo-24,25-dihydrolanosterol + reduced [NADPH--hemoprotein reductase] + O2 = 4,4-dimethyl-8,14-cholestadien-3beta-ol + formate + oxidized [NADPH--hemoprotein reductase] + H2O + 2 H(+). It functions in the pathway steroid biosynthesis; zymosterol biosynthesis; zymosterol from lanosterol: step 1/6. Inhibited by azalanstat. Inhibited by azole antifungal agents ketoconazole, itraconazole and fluconazole. Sterol 14alpha-demethylase that plays a critical role in the cholesterol biosynthesis pathway, being cholesterol the major sterol component in mammalian membranes as well as a precursor for bile acid and steroid hormone synthesis. Cytochrome P450 monooxygenase that catalyzes the three-step oxidative removal of the 14alpha-methyl group (C-32) of sterols such as lanosterol (lanosta-8,24-dien-3beta-ol) and 24,25-dihydrolanosterol (DHL) in the form of formate, and converts the sterols to 4,4-dimethyl-5alpha-cholesta-8,14,24-trien-3beta-ol and 4,4-dimethyl-8,14-cholestadien-3beta-ol, respectively, which are intermediates of cholesterol biosynthesis. Can also demethylate substrates not intrinsic to mammals, such as eburicol (24-methylene-24,25-dihydrolanosterol), but at a lower rate than DHL. This chain is Lanosterol 14-alpha demethylase, found in Pongo abelii (Sumatran orangutan).